The chain runs to 278 residues: 3-methyl-2-oxobutanoate hydroxymethyltransferase (278 aa).

Asp-43 and Asp-82 together coordinate Mg(2+). 3-methyl-2-oxobutanoate contacts are provided by residues 43 to 44 (DS), Asp-82, and Lys-112. Glu-114 provides a ligand contact to Mg(2+). Glu-181 (proton acceptor) is an active-site residue.

The protein belongs to the PanB family. In terms of assembly, homodecamer; pentamer of dimers. Requires Mg(2+) as cofactor.

It localises to the cytoplasm. The enzyme catalyses 3-methyl-2-oxobutanoate + (6R)-5,10-methylene-5,6,7,8-tetrahydrofolate + H2O = 2-dehydropantoate + (6S)-5,6,7,8-tetrahydrofolate. Its pathway is cofactor biosynthesis; (R)-pantothenate biosynthesis; (R)-pantoate from 3-methyl-2-oxobutanoate: step 1/2. Catalyzes the reversible reaction in which hydroxymethyl group from 5,10-methylenetetrahydrofolate is transferred onto alpha-ketoisovalerate to form ketopantoate. The protein is 3-methyl-2-oxobutanoate hydroxymethyltransferase of Bacillus cereus (strain B4264).